Consider the following 812-residue polypeptide: Axin-2 (812 aa).

The interval 1–43 (MNRTLTDPMVSSFREDDPRPPVPGEEGETTCHHPSKLAMMRPK) is disordered. The RGS domain occupies 84-203 (SLHFLLGDQD…LTSDIYLEYV (120 aa)). Disordered regions lie at residues 275–326 (SYRR…AIPP), 388–430 (ETMS…TCEE), 446–484 (TPGC…SSMN), and 609–726 (RQTK…SGCH). A compositionally biased stretch (polar residues) spans 285 to 303 (NRFTSGYSFAPATSANDSE). Residues 305–323 (SSDALTDDSMSMTDSSVDA) show a composition bias toward low complexity. The segment at 329–415 (LGSKKQLQRE…RDESEMSSSS (87 aa)) is interaction with GSK3B. A compositionally biased stretch (basic and acidic residues) spans 388 to 397 (ETMSSLEERL). Positions 401-410 (QEEEERDESE) are enriched in acidic residues. Low complexity predominate over residues 411 to 421 (MSSSSASHSLP). The tract at residues 415-467 (SASHSLPLLPPGTCEEDPQAILDEHLSRVLKTPGCQSPGLLRHSPRSRSPEQR) is interaction with beta-catenin. The segment covering 475–484 (STRSQSSSMN) has biased composition (polar residues). A compositionally biased stretch (basic and acidic residues) spans 672–683 (EEARRRLEEVSK). The 83-residue stretch at 730–812 (GSETVVTYFF…KILGKVDRMD (83 aa)) folds into the DIX domain.

As to quaternary structure, interacts with hwa; leading to promote the tankyrase-mediated degradation of axin1. Post-translationally, ADP-ribosylated by tankyrase tnks and tnks2. Poly-ADP-ribosylated protein is recognized by rnf146, followed by ubiquitination and subsequent activation of the Wnt signaling pathway. In terms of processing, ubiquitinated by rnf146 when poly-ADP-ribosylated, leading to its degradation and subsequent activation of the Wnt signaling pathway.

The protein resides in the cytoplasm. Functionally, component of the beta-catenin destruction complex required for regulating ctnnb1 levels through phosphorylation and ubiquitination, and modulating Wnt-signaling. Controls dorsoventral patterning by down-regulating ctnnb1 to inhibit the Wnt signaling pathway and ventralize embryos. This chain is Axin-2 (axin2), found in Danio rerio (Zebrafish).